The following is a 766-amino-acid chain: Single-minded homolog 1 (766 aa).

Residues 1–53 form the bHLH domain; that stretch reads MKEKSKNAARTRREKENSEFYELAKLLPLPSAITSQLDKASIIRLTTSYLKMR. PAS domains follow at residues 77–147 and 218–288; these read GREL…QPYH and PPSA…LVKG. A PAC domain is found at 292-335; sequence TKYYRFLAKHGGWVWVQSYATIVHNSRSSRPHCIVSVNYVLTDT. In terms of domain architecture, Single-minded C-terminal spans 336 to 766; sequence EYKGLQLSLD…GTSVIITNGS (431 aa). Positions 353–365 are enriched in polar residues; sequence AFSYTSSSTPTMT. 3 disordered regions span residues 353-431, 528-563, and 642-662; these read AFSY…SQHD, WDEDSVVSSPDPGSASESGDRYRTEQYQSSPHEPSK, and SPRENDYDNSPTALSRISSPN. The short motif at 368–387 is the Nuclear localization signal element; sequence RKGAKSRLSSSKSKSRTSPY. The segment covering 373-385 has biased composition (low complexity); the sequence is SRLSSSKSKSRTS. Residues 394-404 show a composition bias toward basic and acidic residues; that stretch reads HTERSESDHDS. The segment covering 649 to 662 has biased composition (polar residues); the sequence is DNSPTALSRISSPN.

As to quaternary structure, efficient DNA binding requires dimerization with another bHLH protein. Heterodimer; forms a heterodimer with ARNT, ARNT2.

It is found in the nucleus. Functionally, transcriptional factor that may have pleiotropic effects during embryogenesis and in the adult. The sequence is that of Single-minded homolog 1 (SIM1) from Pan troglodytes (Chimpanzee).